Reading from the N-terminus, the 147-residue chain is Hemoglobin subunit beta (147 aa).

Residues 3-147 (EWTDSERAII…VVSALGREYH (145 aa)) enclose the Globin domain. Heme b is bound by residues histidine 64 and histidine 93.

It belongs to the globin family. As to quaternary structure, heterotetramer of two alpha chains and two beta chains. As to expression, red blood cells.

In terms of biological role, involved in oxygen transport from gills to the various peripheral tissues. This chain is Hemoglobin subunit beta (hbb), found in Gadus morhua (Atlantic cod).